The following is a 141-amino-acid chain: Hemoglobin subunit alpha (141 aa).

The Globin domain maps to 1–141 (VLSPADKTNV…VSTVLTSKYR (141 aa)). Ser-3 is subject to Phosphoserine. The residue at position 7 (Lys-7) is an N6-succinyllysine. At Thr-8 the chain carries Phosphothreonine. N6-succinyllysine is present on Lys-11. Lys-16 is modified (N6-acetyllysine; alternate). Position 16 is an N6-succinyllysine; alternate (Lys-16). Tyr-24 is subject to Phosphotyrosine. The residue at position 35 (Ser-35) is a Phosphoserine. Lys-40 carries the N6-succinyllysine modification. The residue at position 49 (Ser-49) is a Phosphoserine. His-58 serves as a coordination point for O2. His-87 is a heme b binding site. A Phosphoserine modification is found at Ser-102. At Thr-108 the chain carries Phosphothreonine. Residues Ser-124 and Ser-131 each carry the phosphoserine modification. Phosphothreonine is present on residues Thr-134 and Thr-137. Phosphoserine is present on Ser-138.

It belongs to the globin family. Heterotetramer of two alpha chains and two beta chains. As to expression, red blood cells.

Its function is as follows. Involved in oxygen transport from the lung to the various peripheral tissues. In terms of biological role, hemopressin acts as an antagonist peptide of the cannabinoid receptor CNR1. Hemopressin-binding efficiently blocks cannabinoid receptor CNR1 and subsequent signaling. This Loris tardigradus (Slender loris) protein is Hemoglobin subunit alpha (HBA).